A 563-amino-acid polypeptide reads, in one-letter code: 5-aminolevulinate synthase, mitochondrial (563 aa).

The transit peptide at M1–T18 directs the protein to the mitochondrion. Substrate is bound by residues R137, S251, and K270. Pyridoxal 5'-phosphate contacts are provided by S303, H331, and T373. Residue K376 is part of the active site. The residue at position 376 (K376) is an N6-(pyridoxal phosphate)lysine. Pyridoxal 5'-phosphate contacts are provided by T405 and T406. T491 serves as a coordination point for substrate.

Belongs to the class-II pyridoxal-phosphate-dependent aminotransferase family. In terms of assembly, homodimer. The cofactor is pyridoxal 5'-phosphate.

The protein localises to the mitochondrion matrix. It carries out the reaction succinyl-CoA + glycine + H(+) = 5-aminolevulinate + CO2 + CoA. The protein operates within porphyrin-containing compound metabolism; protoporphyrin-IX biosynthesis; 5-aminolevulinate from glycine: step 1/1. In terms of biological role, catalyzes the synthesis of 5-aminolevulinate (ALA) from succinyl-CoA and glycine, the first and rate-limiting step in heme biosynthesis. The polypeptide is 5-aminolevulinate synthase, mitochondrial (HEM1) (Yarrowia lipolytica (strain CLIB 122 / E 150) (Yeast)).